Consider the following 85-residue polypeptide: MLAWVIIASIITAGFSVALVGMNATKAQGNAAASAFESVARQPEAGDQINRMLLFALAFIETIMIFTLTVALILLFANPLLGKLS.

2 consecutive transmembrane segments (helical) span residues 1–21 (MLAW…ALVG) and 53–73 (LLFA…VALI).

Belongs to the ATPase C chain family. As to quaternary structure, F-type ATPases have 2 components, F(1) - the catalytic core - and F(0) - the membrane proton channel. F(1) has five subunits: alpha(3), beta(3), gamma(1), delta(1), epsilon(1). F(0) has three main subunits: a(1), b(2) and c(10-14). The alpha and beta chains form an alternating ring which encloses part of the gamma chain. F(1) is attached to F(0) by a central stalk formed by the gamma and epsilon chains, while a peripheral stalk is formed by the delta and b chains.

It is found in the cell inner membrane. F(1)F(0) ATP synthase produces ATP from ADP in the presence of a proton or sodium gradient. F-type ATPases consist of two structural domains, F(1) containing the extramembraneous catalytic core and F(0) containing the membrane proton channel, linked together by a central stalk and a peripheral stalk. During catalysis, ATP synthesis in the catalytic domain of F(1) is coupled via a rotary mechanism of the central stalk subunits to proton translocation. Functionally, key component of the F(0) channel; it plays a direct role in translocation across the membrane. A homomeric c-ring of between 10-14 subunits forms the central stalk rotor element with the F(1) delta and epsilon subunits. This Dictyoglomus turgidum (strain DSM 6724 / Z-1310) protein is ATP synthase subunit c.